The primary structure comprises 282 residues: Sirohydrochlorin cobaltochelatase CbiKC (282 aa).

Residue His166 is the Proton acceptor of the active site. Positions 166 and 228 each coordinate Co(2+).

Belongs to the CbiK family.

Its subcellular location is the cytoplasm. The enzyme catalyses Co-sirohydrochlorin + 2 H(+) = sirohydrochlorin + Co(2+). It catalyses the reaction siroheme + 2 H(+) = sirohydrochlorin + Fe(2+). The protein operates within cofactor biosynthesis; adenosylcobalamin biosynthesis; cob(II)yrinate a,c-diamide from sirohydrochlorin (anaerobic route): step 1/10. It functions in the pathway porphyrin-containing compound metabolism; siroheme biosynthesis; siroheme from sirohydrochlorin: step 1/1. Its function is as follows. Catalyzes the insertion of Co(2+) into sirohydrochlorin as part of the anaerobic pathway to cobalamin biosynthesis. To a lesser extent, is also able to insert Fe(2+) into sirohydrochlorin, yielding siroheme. The chain is Sirohydrochlorin cobaltochelatase CbiKC (cbiKc) from Nitratidesulfovibrio vulgaris (strain ATCC 29579 / DSM 644 / CCUG 34227 / NCIMB 8303 / VKM B-1760 / Hildenborough) (Desulfovibrio vulgaris).